The sequence spans 358 residues: Type II restriction enzyme CviJI (358 aa).

Mg(2+) serves as cofactor.

The catalysed reaction is Endonucleolytic cleavage of DNA to give specific double-stranded fragments with terminal 5'-phosphates.. A P subtype restriction enzyme that recognizes the double-stranded sequence 5'-RGCY-3' and cleaves after G-2. In the presence of ATP, there is a relaxation of its specificity and it can cleave 5'-RGCN-3' and 5'-YGCY-3', but not 5'-YGCR-3' (R.CviJI* activity). This chain is Type II restriction enzyme CviJI, found in Paramecium bursaria Chlorella virus IL3A (PBCV-IL3A).